We begin with the raw amino-acid sequence, 208 residues long: Protein-L-isoaspartate O-methyltransferase (208 aa).

Residue Ser-59 is part of the active site.

Belongs to the methyltransferase superfamily. L-isoaspartyl/D-aspartyl protein methyltransferase family.

Its subcellular location is the cytoplasm. It catalyses the reaction [protein]-L-isoaspartate + S-adenosyl-L-methionine = [protein]-L-isoaspartate alpha-methyl ester + S-adenosyl-L-homocysteine. Its function is as follows. Catalyzes the methyl esterification of L-isoaspartyl residues in peptides and proteins that result from spontaneous decomposition of normal L-aspartyl and L-asparaginyl residues. It plays a role in the repair and/or degradation of damaged proteins. The polypeptide is Protein-L-isoaspartate O-methyltransferase (Yersinia pseudotuberculosis serotype O:1b (strain IP 31758)).